Reading from the N-terminus, the 116-residue chain is Large ribosomal subunit protein bL17 (116 aa).

This sequence belongs to the bacterial ribosomal protein bL17 family. Part of the 50S ribosomal subunit. Contacts protein L32.

This is Large ribosomal subunit protein bL17 from Helicobacter pylori (strain P12).